We begin with the raw amino-acid sequence, 180 residues long: ADP-ribosylation factor-like protein 1 (180 aa).

The N-myristoyl glycine moiety is linked to residue glycine 2. GTP contacts are provided by residues 23–30 (GLDGAGKT), 66–70 (DLGGQ), and 125–128 (NKQD).

The protein belongs to the small GTPase superfamily. Arf family. Expressed in neuronal cells. Expression in hypodermal tissues is absent.

It localises to the golgi apparatus. It is found in the cytoplasm. The protein resides in the cytoplasmic granule. Its function is as follows. GTP-binding protein that may be involved in protein trafficking; may modulate vesicle budding and uncoating within the Golgi apparatus. Plays a role in male tail tip morphogenesis. The protein is ADP-ribosylation factor-like protein 1 of Caenorhabditis elegans.